The chain runs to 325 residues: Tetraacyldisaccharide 4'-kinase (325 aa).

54–61 is a binding site for ATP; the sequence is SVGGTGKT.

Belongs to the LpxK family.

It catalyses the reaction a lipid A disaccharide + ATP = a lipid IVA + ADP + H(+). The protein operates within glycolipid biosynthesis; lipid IV(A) biosynthesis; lipid IV(A) from (3R)-3-hydroxytetradecanoyl-[acyl-carrier-protein] and UDP-N-acetyl-alpha-D-glucosamine: step 6/6. Functionally, transfers the gamma-phosphate of ATP to the 4'-position of a tetraacyldisaccharide 1-phosphate intermediate (termed DS-1-P) to form tetraacyldisaccharide 1,4'-bis-phosphate (lipid IVA). This Rickettsia akari (strain Hartford) protein is Tetraacyldisaccharide 4'-kinase.